The sequence spans 128 residues: MRMYETIFIVQPDLGEEEMKGISTKVQDVIASMKGDFKRLEDWGPRKLAYPINKFARGRYYYLRFDGDSALIAELERRLRLDDKVIRYQSVKLEKEVALAAAIPTKVAEEEAVESAEETKVETTTVEE.

The protein belongs to the bacterial ribosomal protein bS6 family.

Its function is as follows. Binds together with bS18 to 16S ribosomal RNA. The polypeptide is Small ribosomal subunit protein bS6 (Geotalea uraniireducens (strain Rf4) (Geobacter uraniireducens)).